A 392-amino-acid chain; its full sequence is MGDHFIRHIALLGFEKRFVPSQHYVYMFLVKWQDLSEKVVYRRFTEIYEFHKILKEMFPIEAGDINPENRIIPHLPAPRWYDGQRVAESRQGTLTEYCSTLMSLPVKISRCPHLLNFFKVRPDDLKLPTDSQVKKPETYLMPKDGKNNAADITGPIILQTYRAIADYEKGSSSQMALATGDVVDVVEKNESGWWFCQMKTKRGWVPASYLEPLDSPDEAEDPEPNYAGEPYITIKAYTAVLEDEISLEEGEAIEVIHKLLDGWWVIRKEDVTGYFPSMYLQKAGQDVAQAKSQIKSRGAPPRRSSIRNAHSIHQRSRKRLSQDTYRRNSVRFMQQRRHQRPEPQRSRSALREQQQPKTERPKPQPAVPPRPSADLILHRCSESTKRKLASAV.

In terms of domain architecture, PX spans His4 to Leu125. SH3 domains are found at residues Ile156–Ser215 and Tyr226–Gln285. The interval Ala290 to Val392 is disordered. Ser304 and Ser305 each carry phosphoserine. Positions His310–Arg319 are enriched in basic residues. Phosphoserine is present on residues Ser321, Ser329, and Ser348. A compositionally biased stretch (basic and acidic residues) spans Ile376–Lys385.

Component of the phagocyte NADPH oxidase complex composed of an obligatory core heterodimer formed by the membrane proteins CYBA and CYBB and the cytosolic regulatory subunits NCF1/p47-phox, NCF2/p67-phox, NCF4/p40-phox and the small GTPase RAC1 or RAC2. Part of a cytosolic complex composed at least by NCF1, NCF2 and NCF4. Interacts (via C-terminus) with NCF2 (via the C-terminal SH3 domain). Interacts with NCF4. Interacts with CYBB. Interacts (via the second SH3 domain) with CYBA; interaction is phosphorylation-dependent. Interacts with NOXA1. Interacts with ADAM15. Interacts with TRAF4. Interacts with FASLG. Interacts with PARK7 (via C-terminus); the interaction is enhanced by LPS and modulates NCF1 phosphorylation and membrane translocation. Post-translationally, phosphorylated by PRKCD; phosphorylation induces activation of NCF1, leading to assembly and activation of the NADPH oxidase complex.

It localises to the cytoplasm. Its subcellular location is the cytosol. It is found in the membrane. Its function is as follows. Subunit of the phagocyte NADPH oxidase complex that mediates the transfer of electrons from cytosolic NADPH to O2 to produce the superoxide anion (O2(-)). In the activated complex, electrons are first transferred from NADPH to flavin adenine dinucleotide (FAD) and subsequently transferred via two heme molecules to molecular oxygen, producing superoxide through an outer-sphere reaction. Activation of the NADPH oxidase complex is initiated by the assembly of cytosolic subunits of the NADPH oxidase complex with the core NADPH oxidase complex to form a complex at the plasma membrane or phagosomal membrane. This activation process is initiated by phosphorylation dependent binding of the cytosolic NCF1/p47-phox subunit to the C-terminus of CYBA/p22-phox. The protein is Neutrophil cytosol factor 1 of Bos taurus (Bovine).